We begin with the raw amino-acid sequence, 170 residues long: 6,7-dimethyl-8-ribityllumazine synthase (170 aa).

5-amino-6-(D-ribitylamino)uracil is bound by residues W25, 57–59, and 79–81; these read AVE and AVI. 84-85 contacts (2S)-2-hydroxy-3-oxobutyl phosphate; the sequence is DT. The active-site Proton donor is H87. N112 contacts 5-amino-6-(D-ribitylamino)uracil. R126 lines the (2S)-2-hydroxy-3-oxobutyl phosphate pocket.

Belongs to the DMRL synthase family.

The enzyme catalyses (2S)-2-hydroxy-3-oxobutyl phosphate + 5-amino-6-(D-ribitylamino)uracil = 6,7-dimethyl-8-(1-D-ribityl)lumazine + phosphate + 2 H2O + H(+). It functions in the pathway cofactor biosynthesis; riboflavin biosynthesis; riboflavin from 2-hydroxy-3-oxobutyl phosphate and 5-amino-6-(D-ribitylamino)uracil: step 1/2. Catalyzes the formation of 6,7-dimethyl-8-ribityllumazine by condensation of 5-amino-6-(D-ribitylamino)uracil with 3,4-dihydroxy-2-butanone 4-phosphate. This is the penultimate step in the biosynthesis of riboflavin. The polypeptide is 6,7-dimethyl-8-ribityllumazine synthase (Thermobifida fusca (strain YX)).